Here is a 204-residue protein sequence, read N- to C-terminus: Transmembrane protein 186 (204 aa).

Over 1–69 (MLELLCRVSP…RLVAALSRLK (69 aa)) the chain is Mitochondrial matrix. Residues 70 to 90 (VYQAVITAAGTPIVFALGSAG) form a helical membrane-spanning segment. At 91-95 (QLSTD) the chain is on the mitochondrial intermembrane side. Residues 96-116 (ALAIYAAIGVTGLITLTLASY) traverse the membrane as a helical segment. Topologically, residues 117-204 (ASSNLVGFIY…RQLFEGLFGN (88 aa)) are mitochondrial matrix.

The protein belongs to the TMEM186 family. Associates with mitochondrial complex I assembly intermediates during its biogenesis.

The protein resides in the mitochondrion inner membrane. Its function is as follows. As part of the MCIA complex, required for efficient assembly of the mitochondrial complex I. The polypeptide is Transmembrane protein 186 (Drosophila melanogaster (Fruit fly)).